A 552-amino-acid chain; its full sequence is TBCC domain-containing protein 1 (552 aa).

One can recognise a C-CAP/cofactor C-like domain in the interval 304–435; that stretch reads PRLHRIVVMS…LEDHMARTGL (132 aa).

This sequence belongs to the TBCC family. As to expression, expressed in brain and testis (at protein level).

Its subcellular location is the cytoplasm. It localises to the cytoskeleton. The protein resides in the microtubule organizing center. It is found in the centrosome. The protein localises to the spindle pole. Its function is as follows. Plays a role in the regulation of centrosome and Golgi apparatus positioning, with consequences on cell shape and cell migration. The sequence is that of TBCC domain-containing protein 1 (Tbccd1) from Mus musculus (Mouse).